The following is a 394-amino-acid chain: MSLLFLDTFAGISGDMFLGLLVDLGVPLPSIQEGLDRLPVTGYQLHQQRTERQHVAACKIIVEHEEQHHHRTWRDIDRMLAESSLKPTVVDLARRIFRRIGEAEAKIHGRALDEVHFHEVGAIDSIVDIVGAAVGLDYLHPDRIVCAPLPLTRGTVHCAHGSFPLPAPATLEILRGLPTVGDTAEVELVTPTGAAIAAETAEFGDLPAMTLERVGYGAGDRQLSDRPNLLRGLLGTADDPWEGETDRITILECHLDDANPEWLGALMEHLLEEGALDVAFAPLQMKKNRPGVHLTVLAPQDKTVALARRILRESTAGGLRYQEATRFKLRRQIERLTTPLGEVHIKLFYEGDKLLRLAPEFDSCQKLAQSSGLPLPEIYRLAEQTAYDFFRKKG.

Belongs to the LarC family.

In Syntrophotalea carbinolica (strain DSM 2380 / NBRC 103641 / GraBd1) (Pelobacter carbinolicus), this protein is Putative nickel insertion protein.